Reading from the N-terminus, the 454-residue chain is Zinc finger protein 474 (454 aa).

The disordered stretch occupies residues 48-85 (RGEKIKTNPRKNRPGTVILSKQSSRRIMSGSQPRPPVI). Over residues 66–79 (LSKQSSRRIMSGSQ) the composition is skewed to polar residues. The C2HC/C3H-type 1 zinc finger occupies 91-120 (GFRVCYICGREFGSQSLGIHEPQCLEKWRV). Residues C95, C98, H110, and C114 each contribute to the Zn(2+) site. Positions 125 to 146 (LPKHLRRPEPSKPPPFSGSGSY) are disordered. 5 C2HC/C3H-type zinc fingers span residues 162 to 191 (QLLPCETCGRTFLPDRLLVHQRSCKQKVEG), 218 to 247 (RTVICYICGREFGTLSLPIHEPKCLEKWKV), 281 to 310 (QLVSCPNCSQTFAPDRLPVHQRSCKAQPSG), 352 to 381 (PTIVCYICGREYGTKSIAIHEPQCLKKWHN), and 425 to 454 (QLVPCNICGRTFLPDRLIVHQRSCKPKVAK). Zn(2+)-binding residues include C166, C169, H181, C185, C222, C225, H237, and C241. The tract at residues 256 to 282 (FRQPLPQKPQPLLTGQPKHAGPRQGQL) is disordered. Zn(2+) is bound by residues C285, C288, H300, C304, C356, C359, H371, C375, C429, C432, H444, and C448. The tract at residues 299–345 (VHQRSCKAQPSGPKVQDLTLGSRGGLKESTNPKPQRNMAAPPVTDKP) is disordered.

Zn(2+) is required as a cofactor.

The sequence is that of Zinc finger protein 474 (ZNF474) from Bos taurus (Bovine).